A 202-amino-acid chain; its full sequence is NAD(P)H dehydrogenase (quinone) 2 (202 aa).

Positions 4–190 (VLVLYYSSYG…AGAFHQGEIV (187 aa)) constitute a Flavodoxin-like domain. Residues 10-15 (SSYGHI) and 78-80 (TRF) contribute to the FMN site. Tyrosine 12 provides a ligand contact to NAD(+). Residue tryptophan 98 coordinates substrate. Residues 113-119 (STGTQHG) and histidine 134 each bind FMN.

The protein belongs to the WrbA family. FMN is required as a cofactor.

It carries out the reaction a quinone + NADH + H(+) = a quinol + NAD(+). It catalyses the reaction a quinone + NADPH + H(+) = a quinol + NADP(+). This Rhizobium meliloti (strain 1021) (Ensifer meliloti) protein is NAD(P)H dehydrogenase (quinone) 2.